A 405-amino-acid polypeptide reads, in one-letter code: Serine-type anaerobic sulfatase-maturating enzyme (405 aa).

The Radical SAM core domain maps to 18–249; sequence PRSPVPFHIL…QWRKRCDRGR (232 aa). [4Fe-4S] cluster-binding residues include Cys-35 and Cys-39. S-adenosyl-L-methionine is bound at residue Tyr-41. Cys-42 contributes to the [4Fe-4S] cluster binding site. 3 residues coordinate S-adenosyl-L-methionine: Gly-84, Ser-140, and Arg-152. Residues Cys-270, Cys-276, and Cys-291 each coordinate [4Fe-4S] cluster. Asp-292 functions as the Proton acceptor in the catalytic mechanism. Cys-331, Cys-334, Cys-340, Cys-344, and Cys-357 together coordinate [4Fe-4S] cluster.

The protein belongs to the radical SAM superfamily. Anaerobic sulfatase-maturating enzyme family. Monomer. Interacts with AtsA prior to its export to the periplasm. [4Fe-4S] cluster is required as a cofactor.

It is found in the cytoplasm. The enzyme catalyses L-seryl-[sulfatase] + S-adenosyl-L-methionine = 3-oxo-L-alanyl-[sulfatase] + 5'-deoxyadenosine + L-methionine + H(+). It participates in protein modification; sulfatase oxidation. Involved in 'Ser-type' sulfatase maturation under anaerobic conditions. Catalyzes the post-translational modification of serine ('Ser-72' in the arylsulfatase AtsA) into 3-oxoalanine (also known as C(alpha)-formylglycine (FGly)), by a free radical chemical mechanism initiated via the reductive cleavage of S-adenosyl-L-methionine (SAM). This is Serine-type anaerobic sulfatase-maturating enzyme from Klebsiella aerogenes (Enterobacter aerogenes).